An 88-amino-acid polypeptide reads, in one-letter code: Small ribosomal subunit protein bS20 (88 aa).

Residues 1–20 (MANTAQARKRARQAVVQNAH) are disordered.

Belongs to the bacterial ribosomal protein bS20 family.

Its function is as follows. Binds directly to 16S ribosomal RNA. The chain is Small ribosomal subunit protein bS20 from Ralstonia pickettii (strain 12J).